The following is a 430-amino-acid chain: Histidine--tRNA ligase (430 aa).

This sequence belongs to the class-II aminoacyl-tRNA synthetase family. In terms of assembly, homodimer.

Its subcellular location is the cytoplasm. It carries out the reaction tRNA(His) + L-histidine + ATP = L-histidyl-tRNA(His) + AMP + diphosphate + H(+). In Acinetobacter baumannii (strain SDF), this protein is Histidine--tRNA ligase.